Here is a 172-residue protein sequence, read N- to C-terminus: MDLRHLIQDIPDFPKPGILFRDISPLLRDPDGWGEVMRQLGDLCTEFKPDLIVGIESRGFIVGTALATNRKIGFVPVRKPGKLPGDVLGIDYSLEYGSDRLEIHADALQGHPRVLMVDDLLATGGTAKATVELIEQAGGDLVGCGFVIELAALGGRQQLPVEIPVKSLIIYS.

This sequence belongs to the purine/pyrimidine phosphoribosyltransferase family. In terms of assembly, homodimer.

It is found in the cytoplasm. The enzyme catalyses AMP + diphosphate = 5-phospho-alpha-D-ribose 1-diphosphate + adenine. The protein operates within purine metabolism; AMP biosynthesis via salvage pathway; AMP from adenine: step 1/1. Its function is as follows. Catalyzes a salvage reaction resulting in the formation of AMP, that is energically less costly than de novo synthesis. In Prochlorococcus marinus (strain MIT 9303), this protein is Adenine phosphoribosyltransferase.